The primary structure comprises 194 residues: dITP/XTP pyrophosphatase (194 aa).

9–14 (THNPGK) provides a ligand contact to substrate. Aspartate 40 and aspartate 69 together coordinate Mg(2+). Aspartate 69 serves as the catalytic Proton acceptor. Substrate-binding positions include serine 70, 152-155 (FGYD), lysine 175, and 180-181 (HR).

Belongs to the HAM1 NTPase family. As to quaternary structure, homodimer. Requires Mg(2+) as cofactor.

The catalysed reaction is XTP + H2O = XMP + diphosphate + H(+). It catalyses the reaction dITP + H2O = dIMP + diphosphate + H(+). The enzyme catalyses ITP + H2O = IMP + diphosphate + H(+). Functionally, pyrophosphatase that catalyzes the hydrolysis of nucleoside triphosphates to their monophosphate derivatives, with a high preference for the non-canonical purine nucleotides XTP (xanthosine triphosphate), dITP (deoxyinosine triphosphate) and ITP. Seems to function as a house-cleaning enzyme that removes non-canonical purine nucleotides from the nucleotide pool, thus preventing their incorporation into DNA/RNA and avoiding chromosomal lesions. In Caulobacter vibrioides (strain ATCC 19089 / CIP 103742 / CB 15) (Caulobacter crescentus), this protein is dITP/XTP pyrophosphatase.